The chain runs to 159 residues: Ribosomal RNA large subunit methyltransferase H (159 aa).

S-adenosyl-L-methionine-binding positions include Leu76, Gly108, and Phe127–Leu132.

It belongs to the RNA methyltransferase RlmH family. In terms of assembly, homodimer.

It localises to the cytoplasm. The catalysed reaction is pseudouridine(1915) in 23S rRNA + S-adenosyl-L-methionine = N(3)-methylpseudouridine(1915) in 23S rRNA + S-adenosyl-L-homocysteine + H(+). Specifically methylates the pseudouridine at position 1915 (m3Psi1915) in 23S rRNA. The chain is Ribosomal RNA large subunit methyltransferase H from Streptococcus pyogenes serotype M3 (strain SSI-1).